The sequence spans 316 residues: Porphobilinogen deaminase (316 aa).

Cysteine 245 carries the S-(dipyrrolylmethanemethyl)cysteine modification.

It belongs to the HMBS family. In terms of assembly, monomer. It depends on dipyrromethane as a cofactor.

It carries out the reaction 4 porphobilinogen + H2O = hydroxymethylbilane + 4 NH4(+). The protein operates within porphyrin-containing compound metabolism; protoporphyrin-IX biosynthesis; coproporphyrinogen-III from 5-aminolevulinate: step 2/4. Its pathway is porphyrin-containing compound metabolism; chlorophyll biosynthesis. Functionally, tetrapolymerization of the monopyrrole PBG into the hydroxymethylbilane pre-uroporphyrinogen in several discrete steps. In Synechococcus sp. (strain CC9311), this protein is Porphobilinogen deaminase.